The sequence spans 314 residues: Beta-lactamase 2 (314 aa).

An N-terminal signal peptide occupies residues 1-26 (MLHTRIRRATLGAVAALSLVPVMACG). Over residues 32 to 47 (DAAEPAGSAPSSSAAA) the composition is skewed to low complexity. Residues 32 to 51 (DAAEPAGSAPSSSAAAHKPG) are disordered. Ser96 functions as the Acyl-ester intermediate in the catalytic mechanism. 258–260 (KTG) provides a ligand contact to substrate.

This sequence belongs to the class-A beta-lactamase family.

The enzyme catalyses a beta-lactam + H2O = a substituted beta-amino acid. This is Beta-lactamase 2 (blaU) from Streptomyces cacaoi.